Here is a 160-residue protein sequence, read N- to C-terminus: Cytochrome b6-f complex subunit 4 (160 aa).

3 consecutive transmembrane segments (helical) span residues Leu-36 to Ile-56, Leu-95 to Glu-115, and Ala-131 to Ile-151.

The protein belongs to the cytochrome b family. PetD subfamily. As to quaternary structure, the 4 large subunits of the cytochrome b6-f complex are cytochrome b6, subunit IV (17 kDa polypeptide, PetD), cytochrome f and the Rieske protein, while the 4 small subunits are PetG, PetL, PetM and PetN. The complex functions as a dimer.

It is found in the cellular thylakoid membrane. Its function is as follows. Component of the cytochrome b6-f complex, which mediates electron transfer between photosystem II (PSII) and photosystem I (PSI), cyclic electron flow around PSI, and state transitions. In Microcystis aeruginosa (strain NIES-843 / IAM M-2473), this protein is Cytochrome b6-f complex subunit 4.